The following is a 259-amino-acid chain: Thiazole synthase (259 aa).

Lysine 102 functions as the Schiff-base intermediate with DXP in the catalytic mechanism. 1-deoxy-D-xylulose 5-phosphate is bound by residues glycine 163, 189 to 190 (AG), and 211 to 212 (NT).

The protein belongs to the ThiG family. In terms of assembly, homotetramer. Forms heterodimers with either ThiH or ThiS.

Its subcellular location is the cytoplasm. It catalyses the reaction [ThiS sulfur-carrier protein]-C-terminal-Gly-aminoethanethioate + 2-iminoacetate + 1-deoxy-D-xylulose 5-phosphate = [ThiS sulfur-carrier protein]-C-terminal Gly-Gly + 2-[(2R,5Z)-2-carboxy-4-methylthiazol-5(2H)-ylidene]ethyl phosphate + 2 H2O + H(+). It functions in the pathway cofactor biosynthesis; thiamine diphosphate biosynthesis. In terms of biological role, catalyzes the rearrangement of 1-deoxy-D-xylulose 5-phosphate (DXP) to produce the thiazole phosphate moiety of thiamine. Sulfur is provided by the thiocarboxylate moiety of the carrier protein ThiS. In vitro, sulfur can be provided by H(2)S. This is Thiazole synthase from Novosphingobium aromaticivorans (strain ATCC 700278 / DSM 12444 / CCUG 56034 / CIP 105152 / NBRC 16084 / F199).